Here is a 93-residue protein sequence, read N- to C-terminus: Small ribosomal subunit protein uS19 (93 aa).

This sequence belongs to the universal ribosomal protein uS19 family.

Functionally, protein S19 forms a complex with S13 that binds strongly to the 16S ribosomal RNA. The chain is Small ribosomal subunit protein uS19 from Oenococcus oeni (strain ATCC BAA-331 / PSU-1).